We begin with the raw amino-acid sequence, 271 residues long: ATP synthase subunit a (271 aa).

5 helical membrane passes run 40–60 (TINI…LVLF), 100–120 (LIAP…LMDL), 146–166 (DVNV…FYSI), 220–240 (LIFI…LNVP), and 242–262 (AIFH…LTIV).

The protein belongs to the ATPase A chain family. F-type ATPases have 2 components, CF(1) - the catalytic core - and CF(0) - the membrane proton channel. CF(1) has five subunits: alpha(3), beta(3), gamma(1), delta(1), epsilon(1). CF(0) has three main subunits: a(1), b(2) and c(9-12). The alpha and beta chains form an alternating ring which encloses part of the gamma chain. CF(1) is attached to CF(0) by a central stalk formed by the gamma and epsilon chains, while a peripheral stalk is formed by the delta and b chains.

The protein resides in the cell inner membrane. Its function is as follows. Key component of the proton channel; it plays a direct role in the translocation of protons across the membrane. The sequence is that of ATP synthase subunit a from Escherichia coli O1:K1 / APEC.